We begin with the raw amino-acid sequence, 167 residues long: Peptidoglycan L-alanyl-D-glutamate endopeptidase CwlK (167 aa).

An N-terminal signal peptide occupies residues 1–26; that stretch reads MNLPAKTFVILCILFLLDLCFSYIRH.

The protein belongs to the peptidase M15C family.

The protein localises to the cell membrane. Functionally, cleaves the linkage of the L-alanine-D-glutamic acid of B.subtilis cell wall. This chain is Peptidoglycan L-alanyl-D-glutamate endopeptidase CwlK (cwlK), found in Bacillus subtilis (strain 168).